The primary structure comprises 125 residues: Histone H2A (125 aa).

The span at 1–18 (MSGRGKGGKVKAKAKSRS) shows a compositional bias: basic residues. The tract at residues 1 to 21 (MSGRGKGGKVKAKAKSRSSRA) is disordered. Ser2 is modified (N-acetylserine). A Phosphoserine modification is found at Ser2. Lys119 participates in a covalent cross-link: Glycyl lysine isopeptide (Lys-Gly) (interchain with G-Cter in ubiquitin).

The protein belongs to the histone H2A family. In terms of assembly, the nucleosome is a histone octamer containing two molecules each of H2A, H2B, H3 and H4 assembled in one H3-H4 heterotetramer and two H2A-H2B heterodimers. The octamer wraps approximately 147 bp of DNA. In terms of processing, monoubiquitination of Lys-119 gives a specific tag for epigenetic transcriptional repression. Phosphorylation on Ser-2 is enhanced during mitosis. Phosphorylation on Ser-2 directly represses transcription.

The protein localises to the nucleus. The protein resides in the chromosome. Functionally, core component of nucleosome. Nucleosomes wrap and compact DNA into chromatin, limiting DNA accessibility to the cellular machineries which require DNA as a template. Histones thereby play a central role in transcription regulation, DNA repair, DNA replication and chromosomal stability. DNA accessibility is regulated via a complex set of post-translational modifications of histones, also called histone code, and nucleosome remodeling. This chain is Histone H2A, found in Chironomus thummi thummi (Midge).